The following is a 177-amino-acid chain: O-acetyl-ADP-ribose deacetylase (177 aa).

The region spanning 1-175 (MKTRIHVVQG…LYERLLTQQG (175 aa)) is the Macro domain. Substrate-binding positions include 11-12 (DI), N25, 33-35 (GVD), and 122-126 (STGVY). D35 functions as the Proton acceptor in the catalytic mechanism.

It belongs to the MacroD-type family. YmdB subfamily. In terms of assembly, homodimer. Interacts with RNase III.

It catalyses the reaction 3''-O-acetyl-ADP-D-ribose + H2O = ADP-D-ribose + acetate + H(+). The catalysed reaction is 2''-O-acetyl-ADP-D-ribose + H2O = ADP-D-ribose + acetate + H(+). In terms of biological role, deacetylates O-acetyl-ADP ribose to yield ADP-ribose and free acetate. Down-regulates ribonuclease 3 (RNase III) activity. Acts by interacting directly with the region of the ribonuclease that is required for dimerization/activation. The sequence is that of O-acetyl-ADP-ribose deacetylase from Escherichia coli O157:H7.